Reading from the N-terminus, the 54-residue chain is uncharacterized protein (54 aa).

Residues 1 to 28 (MDRKKDEIQRKYREQMREKKEREKEDGS) show a composition bias toward basic and acidic residues. A disordered region spans residues 1–29 (MDRKKDEIQRKYREQMREKKEREKEDGSS). Residues 31–51 (TFEIVVVLAIIILMFFFNSVF) form a helical membrane-spanning segment.

The protein resides in the cell membrane. This is an uncharacterized protein from Bacillus subtilis (strain 168).